The chain runs to 310 residues: D-alanine--D-alanine ligase (310 aa).

The ATP-grasp domain occupies 105-301 (KQAFVSAGIL…FEELVERIIL (197 aa)). Residue 133 to 186 (SFGLPLVVKPVQEGSSVGISIVKEESQLAAAVKLAFRHDDEILVEQFIKGQEVQ) coordinates ATP. The Mg(2+) site is built by aspartate 254, glutamate 267, and asparagine 269.

This sequence belongs to the D-alanine--D-alanine ligase family. Mg(2+) is required as a cofactor. The cofactor is Mn(2+).

Its subcellular location is the cytoplasm. The enzyme catalyses 2 D-alanine + ATP = D-alanyl-D-alanine + ADP + phosphate + H(+). It participates in cell wall biogenesis; peptidoglycan biosynthesis. In terms of biological role, cell wall formation. In Pelobacter propionicus (strain DSM 2379 / NBRC 103807 / OttBd1), this protein is D-alanine--D-alanine ligase.